We begin with the raw amino-acid sequence, 499 residues long: MNYFPWLTLIVVFPIAAGSLIFFLPHRGNKVTRGYTIYICVLELLLTTYAFCYNFQLDDPLIQLAEDYKWITFFEFDWRLGIDGLSIGPILLTGFITTLATLAARPVTLNSRLFHFLMLAMYSGQIGSFSSRDLLLFFIMWELELIPVYLLLSVWGGKKRLYSATKFILYTAGGSVFLLIGVLGIGLYGSNEPTLNLETLVNRSYPVALEIIFYIGFFIAFAVKLPIIPFHTWLPDTHGEAHYSTCMLLAGILLKMGAYGLIRINMELLPHAHSIFSPWFMIVGTVQIIYAASTSPGQRNLKKRIAYSSVSHMGFIILGIGSITDTGLNGAVLQIISHGLISAALFFLAGTSYDRIRFAYLDEMGGLAIPIPKIFTLFSILSMASLALPGMSGFVAELIVFFGIITSQKFFLMPKIVITFVMAIGMILTPIYSLSMLRQMFYGYKLFNAPNSYFFDSGPRELFVLISILLPVIGIGIYPDFVLSLSADKAEAIISNFFL.

A run of 14 helical transmembrane segments spans residues 4–24 (FPWLTLIVVFPIAAGSLIFFL), 35–55 (YTIYICVLELLLTTYAFCYNF), 84–104 (GLSIGPILLTGFITTLATLAA), 111–129 (SRLFHFLMLAMYSGQIGSF), 134–154 (LLLFFIMWELELIPVYLLLSV), 167–187 (FILYTAGGSVFLLIGVLGIGL), 208–228 (ALEIIFYIGFFIAFAVKLPII), 242–262 (HYSTCMLLAGILLKMGAYGLI), 272–292 (AHSIFSPWFMIVGTVQIIYAA), 305–325 (IAYSSVSHMGFIILGIGSITD), 330–350 (GAVLQIISHGLISAALFFLAG), 386–406 (LALPGMSGFVAELIVFFGIIT), 416–436 (IVITFVMAIGMILTPIYSLSM), and 462–482 (LFVLISILLPVIGIGIYPDFV).

Belongs to the complex I subunit 4 family.

It is found in the plastid. It localises to the chloroplast thylakoid membrane. It carries out the reaction a plastoquinone + NADH + (n+1) H(+)(in) = a plastoquinol + NAD(+) + n H(+)(out). It catalyses the reaction a plastoquinone + NADPH + (n+1) H(+)(in) = a plastoquinol + NADP(+) + n H(+)(out). The sequence is that of NAD(P)H-quinone oxidoreductase chain 4, chloroplastic from Citrus sinensis (Sweet orange).